We begin with the raw amino-acid sequence, 390 residues long: Na(+)/H(+) antiporter NhaA 1 (390 aa).

The next 11 membrane-spanning stretches (helical) occupy residues 14 to 34 (SGILIILAMILALILANNGVL), 59 to 79 (TILWVNDGLMAIFFFFIGLEL), 94 to 114 (VALPSIAGIGGVIVPAVIFYV), 125 to 145 (GWAIPTVSDTAFALAVLFLLG), 154 to 174 (LFLLSLAIIDDVAAIIIIAIF), 179 to 199 (LSIISLFISFCAIVILTILNY), 205 to 225 (IYIYLLCGIVLWVSVLMSGIH), 260 to 280 (PIVAFLILPIFAFSNAGVVFS), 295 to 315 (IIFGLFIGKQIGVFSFAFLAI), 328 to 348 (WLHLYGLSILTGVGMSMSLFI), and 362 to 382 (ANKIAILLASTMCAVTGYFVL).

The protein belongs to the NhaA Na(+)/H(+) (TC 2.A.33) antiporter family.

The protein localises to the cell inner membrane. The catalysed reaction is Na(+)(in) + 2 H(+)(out) = Na(+)(out) + 2 H(+)(in). Functionally, na(+)/H(+) antiporter that extrudes sodium in exchange for external protons. The chain is Na(+)/H(+) antiporter NhaA 1 from Campylobacter fetus subsp. fetus (strain 82-40).